An 861-amino-acid chain; its full sequence is Bifunctional uridylyltransferase/uridylyl-removing enzyme (861 aa).

Positions 1–321 (MKNDNRIIKN…VYHQKQKIIR (321 aa)) are uridylyltransferase. A uridylyl-removing region spans residues 322 to 678 (LDDEFQLSNR…IMPHHSQGGT (357 aa)). An HD domain is found at 440–562 (VDQHTLFVIR…LPHARYLDYL (123 aa)). ACT domains follow at residues 679–760 (EVFI…AVSR) and 788–861 (QLFL…KSKY).

This sequence belongs to the GlnD family. Mg(2+) is required as a cofactor.

The enzyme catalyses [protein-PII]-L-tyrosine + UTP = [protein-PII]-uridylyl-L-tyrosine + diphosphate. It carries out the reaction [protein-PII]-uridylyl-L-tyrosine + H2O = [protein-PII]-L-tyrosine + UMP + H(+). Uridylyltransferase (UTase) activity is inhibited by glutamine, while glutamine activates uridylyl-removing (UR) activity. In terms of biological role, modifies, by uridylylation and deuridylylation, the PII regulatory proteins (GlnB and homologs), in response to the nitrogen status of the cell that GlnD senses through the glutamine level. Under low glutamine levels, catalyzes the conversion of the PII proteins and UTP to PII-UMP and PPi, while under higher glutamine levels, GlnD hydrolyzes PII-UMP to PII and UMP (deuridylylation). Thus, controls uridylylation state and activity of the PII proteins, and plays an important role in the regulation of nitrogen assimilation and metabolism. The chain is Bifunctional uridylyltransferase/uridylyl-removing enzyme from Legionella pneumophila subsp. pneumophila (strain Philadelphia 1 / ATCC 33152 / DSM 7513).